The chain runs to 260 residues: Thiazole synthase (260 aa).

The active-site Schiff-base intermediate with DXP is the K96. 1-deoxy-D-xylulose 5-phosphate contacts are provided by residues G157, 184 to 185 (AG), and 206 to 207 (NT).

Belongs to the ThiG family. As to quaternary structure, homotetramer. Forms heterodimers with either ThiH or ThiS.

It is found in the cytoplasm. The catalysed reaction is [ThiS sulfur-carrier protein]-C-terminal-Gly-aminoethanethioate + 2-iminoacetate + 1-deoxy-D-xylulose 5-phosphate = [ThiS sulfur-carrier protein]-C-terminal Gly-Gly + 2-[(2R,5Z)-2-carboxy-4-methylthiazol-5(2H)-ylidene]ethyl phosphate + 2 H2O + H(+). It functions in the pathway cofactor biosynthesis; thiamine diphosphate biosynthesis. Its function is as follows. Catalyzes the rearrangement of 1-deoxy-D-xylulose 5-phosphate (DXP) to produce the thiazole phosphate moiety of thiamine. Sulfur is provided by the thiocarboxylate moiety of the carrier protein ThiS. In vitro, sulfur can be provided by H(2)S. The sequence is that of Thiazole synthase from Nitrobacter winogradskyi (strain ATCC 25391 / DSM 10237 / CIP 104748 / NCIMB 11846 / Nb-255).